A 346-amino-acid polypeptide reads, in one-letter code: fMet-Leu-Phe receptor (346 aa).

Asn1 and Asn7 each carry an N-linked (GlcNAc...) asparagine glycan. Residues 1–24 are Extracellular-facing; sequence NSSLPTNISGGTPAVSAGYLFLDI. A helical transmembrane segment spans residues 25-47; it reads ITYLVYAVTFVLGVLGNGLVIWV. Residues 48-58 are Cytoplasmic-facing; that stretch reads AGFRMTHTVTT. Residues 59 to 80 form a helical membrane-spanning segment; sequence ISYLNLAVADFCFTSTLPFFMV. The Extracellular portion of the chain corresponds to 81-97; the sequence is RKAMGGHWPFGWFLCKF. Residues Cys95 and Cys173 are joined by a disulfide bond. A helical membrane pass occupies residues 98–118; that stretch reads IFTIVDINLFGSVFLIALIAL. Over 119–137 the chain is Cytoplasmic; it reads DRCVCVLHPVWTQNHRTVS. A helical transmembrane segment spans residues 138 to 159; sequence LAKKVIIGPWVMALLLTLPVII. Topologically, residues 160 to 202 are extracellular; it reads RVTTVPGKMGTVSCTFNFSPWTNDPKERIKVAIAMLTVRGIIR. The chain crosses the membrane as a helical span at residues 203–223; sequence FIIGFSAPMSIVAVSYGLIAT. Residues 224–239 are Cytoplasmic-facing; the sequence is KIHKQGLIKSSRPLRV. A helical membrane pass occupies residues 240–263; it reads LSFVAAAFFLCWSPYQVVAFIATV. At 264–282 the chain is on the extracellular side; that stretch reads RIRELLQGMYKEISIAVDV. A helical membrane pass occupies residues 283 to 302; sequence TSALAFFNSCLNPMLYVFMG. The Cytoplasmic portion of the chain corresponds to 303–346; sequence QDFRERLIHSLPASLERALTEASTQTSDTATNSTLPSAEVALQA. The segment covering 324–338 has biased composition (polar residues); the sequence is ASTQTSDTATNSTLP. The disordered stretch occupies residues 324–346; the sequence is ASTQTSDTATNSTLPSAEVALQA.

It belongs to the G-protein coupled receptor 1 family. In terms of processing, phosphorylated; which is necessary for desensitization.

The protein resides in the cell membrane. Functionally, high affinity receptor for N-formyl-methionyl peptides (fMLP), which are powerful neutrophil chemotactic factors. Binding of fMLP to the receptor stimulates intracellular calcium mobilization and superoxide anion release. This response is mediated via a G-protein that activates a phosphatidylinositol-calcium second messenger system. Receptor for TAFA4, mediates its effects on chemoattracting macrophages, promoting phagocytosis and increasing ROS release. Receptor for cathepsin CTSG, leading to increased phagocyte chemotaxis. The polypeptide is fMet-Leu-Phe receptor (FPR1) (Pongo pygmaeus (Bornean orangutan)).